We begin with the raw amino-acid sequence, 397 residues long: Cathepsin E-B (397 aa).

The signal sequence occupies residues 1–16 (MRQILVLLLFVTLVYG). Residues 17 to 49 (LIRVPLKRQKSIRKTPKEKGKLSHVWTQQGIDM) constitute a propeptide, activation peptide. One can recognise a Peptidase A1 domain in the interval 74–385 (YFGEISIGTP…DRGNNRVGLA (312 aa)). A glycan (N-linked (GlcNAc...) asparagine) is linked at asparagine 86. The active site involves aspartate 92. The cysteines at positions 105 and 110 are disulfide-linked. Asparagine 130 is a glycosylation site (N-linked (GlcNAc...) asparagine). The cysteines at positions 268 and 272 are disulfide-linked. Aspartate 277 is a catalytic residue. A disulfide bridge links cysteine 310 with cysteine 344.

This sequence belongs to the peptidase A1 family. Homodimer; disulfide-linked. Post-translationally, glycosylated. Contains high mannose-type oligosaccharide. As to expression, expressed predominantly in the anterior and posterior adult stomach and at much lower levels in the larval foregut.

The protein localises to the endosome. It carries out the reaction Similar to cathepsin D, but slightly broader specificity.. May have a role in immune function. Probably involved in the processing of antigenic peptides during MHC class II-mediated antigen presentation. The sequence is that of Cathepsin E-B (ctse-b) from Xenopus laevis (African clawed frog).